Reading from the N-terminus, the 208-residue chain is Uracil phosphoribosyltransferase (208 aa).

5-phospho-alpha-D-ribose 1-diphosphate is bound by residues R78, R103, and D130–S138. Uracil contacts are provided by residues I193 and G198–A200. D199 serves as a coordination point for 5-phospho-alpha-D-ribose 1-diphosphate.

This sequence belongs to the UPRTase family. Requires Mg(2+) as cofactor.

It catalyses the reaction UMP + diphosphate = 5-phospho-alpha-D-ribose 1-diphosphate + uracil. The protein operates within pyrimidine metabolism; UMP biosynthesis via salvage pathway; UMP from uracil: step 1/1. Its activity is regulated as follows. Allosterically activated by GTP. Its function is as follows. Catalyzes the conversion of uracil and 5-phospho-alpha-D-ribose 1-diphosphate (PRPP) to UMP and diphosphate. The protein is Uracil phosphoribosyltransferase of Shewanella baltica (strain OS223).